Here is a 459-residue protein sequence, read N- to C-terminus: Sulfide:quinone oxidoreductase, mitochondrial (459 aa).

Residues 1–24 (MLTLNSTIKSVTGSFQSASMLARF) constitute a mitochondrion transit peptide. 35–39 (GGGSA) serves as a coordination point for FAD. Catalysis depends on cysteine persulfide intermediate residues cysteine 204 and cysteine 383.

It belongs to the SQRD family. The cofactor is FAD.

The protein resides in the mitochondrion. In terms of biological role, catalyzes the oxidation of hydrogen sulfide, with the help of a quinone. This is Sulfide:quinone oxidoreductase, mitochondrial (hmt2) from Schizosaccharomyces pombe (strain 972 / ATCC 24843) (Fission yeast).